A 239-amino-acid chain; its full sequence is 1-(5-phosphoribosyl)-5-[(5-phosphoribosylamino)methylideneamino] imidazole-4-carboxamide isomerase (239 aa).

The Proton acceptor role is filled by Asp-8. The Proton donor role is filled by Asp-129.

The protein belongs to the HisA/HisF family.

It localises to the cytoplasm. The enzyme catalyses 1-(5-phospho-beta-D-ribosyl)-5-[(5-phospho-beta-D-ribosylamino)methylideneamino]imidazole-4-carboxamide = 5-[(5-phospho-1-deoxy-D-ribulos-1-ylimino)methylamino]-1-(5-phospho-beta-D-ribosyl)imidazole-4-carboxamide. It participates in amino-acid biosynthesis; L-histidine biosynthesis; L-histidine from 5-phospho-alpha-D-ribose 1-diphosphate: step 4/9. The polypeptide is 1-(5-phosphoribosyl)-5-[(5-phosphoribosylamino)methylideneamino] imidazole-4-carboxamide isomerase (Bacillus thuringiensis (strain Al Hakam)).